Consider the following 367-residue polypeptide: Phosphoribosylaminoimidazole-succinocarboxamide synthase (367 aa).

The protein belongs to the SAICAR synthetase family.

It carries out the reaction 5-amino-1-(5-phospho-D-ribosyl)imidazole-4-carboxylate + L-aspartate + ATP = (2S)-2-[5-amino-1-(5-phospho-beta-D-ribosyl)imidazole-4-carboxamido]succinate + ADP + phosphate + 2 H(+). The protein operates within purine metabolism; IMP biosynthesis via de novo pathway; 5-amino-1-(5-phospho-D-ribosyl)imidazole-4-carboxamide from 5-amino-1-(5-phospho-D-ribosyl)imidazole-4-carboxylate: step 1/2. The protein is Phosphoribosylaminoimidazole-succinocarboxamide synthase of Shewanella baltica (strain OS155 / ATCC BAA-1091).